Here is a 128-residue protein sequence, read N- to C-terminus: Cystatin-1 (128 aa).

Residues 1-17 form the signal peptide; it reads MIRSAVVLTVLVGVCLA. One can recognise a Cystatin domain in the interval 20–128; the sequence is GFVGGWSQVD…TKEVTSFECN (109 aa). 2 cysteine pairs are disulfide-bonded: cysteine 84–cysteine 96 and cysteine 107–cysteine 127.

The protein belongs to the cystatin family. In terms of tissue distribution, mainly expressed in gut.

It is found in the secreted. Inhibitor of cysteine proteinases. Strongly inhibits mammalian cathepsin B and H, and moderately inhibits mammalian cathepsin C. Also inhibits endogenous cathepsin B-like but not cathepsin C-like proteinases. May have a protective role against undesired digestion of a stored blood meal by endogenous peptidases. The chain is Cystatin-1 from Ornithodoros moubata (Soft tick).